Reading from the N-terminus, the 434-residue chain is Histidine--tRNA ligase (434 aa).

The segment at 412–434 (DQTTVPVEAFPGDHDAPTYEDVV) is disordered.

This sequence belongs to the class-II aminoacyl-tRNA synthetase family.

It localises to the cytoplasm. It catalyses the reaction tRNA(His) + L-histidine + ATP = L-histidyl-tRNA(His) + AMP + diphosphate + H(+). The protein is Histidine--tRNA ligase of Haloquadratum walsbyi (strain DSM 16790 / HBSQ001).